A 239-amino-acid chain; its full sequence is Phosphoribosylaminoimidazole-succinocarboxamide synthase (239 aa).

The protein belongs to the SAICAR synthetase family.

The enzyme catalyses 5-amino-1-(5-phospho-D-ribosyl)imidazole-4-carboxylate + L-aspartate + ATP = (2S)-2-[5-amino-1-(5-phospho-beta-D-ribosyl)imidazole-4-carboxamido]succinate + ADP + phosphate + 2 H(+). It functions in the pathway purine metabolism; IMP biosynthesis via de novo pathway; 5-amino-1-(5-phospho-D-ribosyl)imidazole-4-carboxamide from 5-amino-1-(5-phospho-D-ribosyl)imidazole-4-carboxylate: step 1/2. This chain is Phosphoribosylaminoimidazole-succinocarboxamide synthase, found in Dichelobacter nodosus (strain VCS1703A).